An 87-amino-acid chain; its full sequence is uncharacterized protein (87 aa).

It to H.pylori HP0495/JHP0447.

This is an uncharacterized protein from Campylobacter jejuni subsp. jejuni serotype O:2 (strain ATCC 700819 / NCTC 11168).